A 119-amino-acid polypeptide reads, in one-letter code: Large ribosomal subunit protein uL22 (119 aa).

The protein belongs to the universal ribosomal protein uL22 family. In terms of assembly, part of the 50S ribosomal subunit.

In terms of biological role, this protein binds specifically to 23S rRNA; its binding is stimulated by other ribosomal proteins, e.g. L4, L17, and L20. It is important during the early stages of 50S assembly. It makes multiple contacts with different domains of the 23S rRNA in the assembled 50S subunit and ribosome. Its function is as follows. The globular domain of the protein is located near the polypeptide exit tunnel on the outside of the subunit, while an extended beta-hairpin is found that lines the wall of the exit tunnel in the center of the 70S ribosome. This Rickettsia bellii (strain OSU 85-389) protein is Large ribosomal subunit protein uL22.